We begin with the raw amino-acid sequence, 723 residues long: ESX-1 secretion-associated protein EspK (723 aa).

2 disordered regions span residues 175 to 360 and 393 to 451; these read DLLQ…TPAA and SGAG…GTPV. Over residues 200–209 the composition is skewed to low complexity; the sequence is TPGTPITPGT. Residues 210 to 229 are compositionally biased toward pro residues; sequence PITPIPGAPVTPITPTPGTP. A compositionally biased stretch (low complexity) spans 230-249; that stretch reads VTPVTPGKPVTPVTPVKPGT. 2 stretches are compositionally biased toward pro residues: residues 250–265 and 274–308; these read PGEP…PVAP and PVTP…PSGP. Low complexity-rich tracts occupy residues 309 to 319, 393 to 404, and 412 to 426; these read ATPGTPGGEPA, SGAGSHAATGRA, and AAAP…RTAP. Residues 432–444 show a composition bias toward basic and acidic residues; sequence STDHIDKPDRSES.

It is found in the cytoplasm. In terms of biological role, may act as a chaperone that facilitates EspB secretion through an interaction with EccCb1. This Mycobacterium tuberculosis (strain CDC 1551 / Oshkosh) protein is ESX-1 secretion-associated protein EspK.